A 218-amino-acid chain; its full sequence is Histone H1 (218 aa).

Positions 1–19 (MSETAPVAAPAVSAPGAKA) are enriched in low complexity. Disordered regions lie at residues 1 to 42 (MSET…PSVT) and 89 to 218 (VSKG…TKKK). Residue serine 2 is modified to N-acetylserine. Residues 37-110 (AGPSVTELIT…GASGSFKLNK (74 aa)) form the H15 domain. 4 stretches are compositionally biased toward basic residues: residues 118 to 133 (KATK…KPAA), 141 to 158 (KKPK…KAKK), 166 to 184 (KAAK…KKTA), and 191 to 218 (KAVK…TKKK).

It belongs to the histone H1/H5 family.

It localises to the nucleus. The protein localises to the chromosome. In terms of biological role, histones H1 are necessary for the condensation of nucleosome chains into higher-order structures. The chain is Histone H1 from Gallus gallus (Chicken).